The chain runs to 160 residues: Cytochrome c-type biogenesis protein CcmE (160 aa).

Residues 1 to 9 lie on the Cytoplasmic side of the membrane; it reads MRGLKKKRR. A helical; Signal-anchor for type II membrane protein transmembrane segment spans residues 10-30; it reads IQIIAIAAVALTIATIMIGTA. At 31–160 the chain is on the periplasmic side; it reads MRDGINFFRS…DGGYGGASGS (130 aa). The heme site is built by histidine 123 and tyrosine 127. The interval 141–160 is disordered; the sequence is VYKDPNATDADGGYGGASGS.

It belongs to the CcmE/CycJ family.

The protein localises to the cell inner membrane. Its function is as follows. Heme chaperone required for the biogenesis of c-type cytochromes. Transiently binds heme delivered by CcmC and transfers the heme to apo-cytochromes in a process facilitated by CcmF and CcmH. The sequence is that of Cytochrome c-type biogenesis protein CcmE from Dinoroseobacter shibae (strain DSM 16493 / NCIMB 14021 / DFL 12).